We begin with the raw amino-acid sequence, 282 residues long: Probable endonuclease 4 (282 aa).

The Zn(2+) site is built by His-71, His-111, Glu-147, Asp-181, His-184, His-218, Asp-231, His-233, and Glu-263.

Belongs to the AP endonuclease 2 family. It depends on Zn(2+) as a cofactor.

The catalysed reaction is Endonucleolytic cleavage to 5'-phosphooligonucleotide end-products.. In terms of biological role, endonuclease IV plays a role in DNA repair. It cleaves phosphodiester bonds at apurinic or apyrimidinic (AP) sites, generating a 3'-hydroxyl group and a 5'-terminal sugar phosphate. The sequence is that of Probable endonuclease 4 from Protochlamydia amoebophila (strain UWE25).